A 597-amino-acid polypeptide reads, in one-letter code: tRNA uridine 5-carboxymethylaminomethyl modification enzyme MnmG (597 aa).

10–15 is an FAD binding site; that stretch reads GGGHAG. 267 to 281 provides a ligand contact to NAD(+); it reads GPRYCPSIEDKVVRF.

This sequence belongs to the MnmG family. As to quaternary structure, homodimer. Heterotetramer of two MnmE and two MnmG subunits. Requires FAD as cofactor.

The protein localises to the cytoplasm. Functionally, NAD-binding protein involved in the addition of a carboxymethylaminomethyl (cmnm) group at the wobble position (U34) of certain tRNAs, forming tRNA-cmnm(5)s(2)U34. In Thermus thermophilus (strain ATCC BAA-163 / DSM 7039 / HB27), this protein is tRNA uridine 5-carboxymethylaminomethyl modification enzyme MnmG.